A 117-amino-acid chain; its full sequence is Probable non-functional immunoglobulin kappa variable 1D-42 (117 aa).

A signal peptide spans 1–22 (MDMRVPAQLLGLLLLWLPGVRF). The interval 23-45 (DIQMTQSPSFLSASVGDRVSIIC) is framework-1. The Ig-like domain occupies 23–117 (DIQMTQSPSF…YYCKQDFSYP (95 aa)). The cysteines at positions 45 and 110 are disulfide-linked. The complementarity-determining-1 stretch occupies residues 46 to 56 (WASEGISSNLA). Positions 57–71 (WYLQKPGKSPKLFLY) are framework-2. Residues 72–78 (DAKDLHP) form a complementarity-determining-2 region. Residues 79 to 110 (GVSSRFSGRGSGTDFTLTIISLKPEDFAAYYC) are framework-3. The complementarity-determining-3 stretch occupies residues 111–117 (KQDFSYP).

In terms of assembly, immunoglobulins are composed of two identical heavy chains and two identical light chains; disulfide-linked.

It is found in the secreted. Its subcellular location is the cell membrane. In terms of biological role, probable non-functional open reading frame (ORF) of V region of the variable domain of immunoglobulin light chains. Non-functional ORF generally cannot participate in the synthesis of a productive immunoglobulin chain due to altered V-(D)-J or switch recombination and/or splicing site (at mRNA level) and/or conserved amino acid change (protein level). Immunoglobulins, also known as antibodies, are membrane-bound or secreted glycoproteins produced by B lymphocytes. In the recognition phase of humoral immunity, the membrane-bound immunoglobulins serve as receptors which, upon binding of a specific antigen, trigger the clonal expansion and differentiation of B lymphocytes into immunoglobulins-secreting plasma cells. Secreted immunoglobulins mediate the effector phase of humoral immunity, which results in the elimination of bound antigens. The antigen binding site is formed by the variable domain of one heavy chain, together with that of its associated light chain. Thus, each immunoglobulin has two antigen binding sites with remarkable affinity for a particular antigen. The variable domains are assembled by a process called V-(D)-J rearrangement and can then be subjected to somatic hypermutations which, after exposure to antigen and selection, allow affinity maturation for a particular antigen. This chain is Probable non-functional immunoglobulin kappa variable 1D-42, found in Homo sapiens (Human).